A 335-amino-acid polypeptide reads, in one-letter code: MRN complex-interacting protein (335 aa).

Disordered regions lie at residues 75-102 (EEAV…PSKP) and 118-194 (QELD…ALST). Residue Ser-100 is modified to Phosphoserine. The segment covering 129 to 142 (TQLSTSAERPSSPA) has biased composition (polar residues). Residues 145 to 148 (RKRK) carry the Nuclear localization signal (NLS) motif. Residues 177–194 (STGLFGTEQQGTSPALST) are compositionally biased toward polar residues. The tract at residues 203 to 230 (FPRWKLPSPVTQVNAPSSKWARFLLAPG) is necessary for the association with the MRN complex. The disordered stretch occupies residues 273–335 (RPPQAIHTTT…TTGEDFDDDL (63 aa)). Over residues 286-297 (DRPDRKTREQPR) the composition is skewed to basic and acidic residues.

Belongs to the MRNIP family. Associates with the MRE11-RAD50-NBN (MRN) damage-sensing complex; this association is constitutive. Interacts with MRE11. Interacts with NBN. Interacts with RAD50. Post-translationally, phosphorylated; phosphorylation is constitutive and occurs in the absence of any DNA-damaging stimulus. Phosphorylation is necessary for its nuclear retention.

It is found in the nucleus. The protein localises to the nucleoplasm. In terms of biological role, plays a role in the cellular response to DNA damage and the maintenance of genome stability through its association with the MRN damage-sensing complex. Promotes chromatin loading and activity of the MRN complex to facilitate subsequent ATM-mediated DNA damage response signaling and DNA repair. This Mus musculus (Mouse) protein is MRN complex-interacting protein.